We begin with the raw amino-acid sequence, 179 residues long: Apoptosis regulator Bcl-2 homolog (179 aa).

The BH1 motif lies at 76-95; the sequence is ELFKDLINWGRICGFIVFSA. The short motif at 126–141 is the BH2 element; it reads PWMISHGGQEEFLAFS.

Belongs to the Bcl-2 family. In terms of assembly, interacts with host BECN1 (via BH3 homology domain); this interaction allows the virus to inhibit BECN1, and thus autophagy. Interacts with host BID. Interacts with host BAX.

Its subcellular location is the host mitochondrion. It localises to the host endoplasmic reticulum. Suppresses apoptosis in host cell to promote the viral replication. Has the ability to potentially bind to all the members of the proapoptotic Bcl-2 family. Inhibits autophagy by interacting with host Beclin 1 (BECN1). This Ornithodoros (relapsing fever ticks) protein is Apoptosis regulator Bcl-2 homolog.